Here is a 75-residue protein sequence, read N- to C-terminus: Dermaseptin-SP3 (75 aa).

Residues 1–22 form the signal peptide; sequence MAFLKKSLFLVLFLGLVSLSMC. Residues 23-45 constitute a propeptide that is removed on maturation; the sequence is EEEKRENEVEEEQEDDEQSELRR. Proline amide is present on Pro72. A propeptide spanning residues 74–75 is cleaved from the precursor; the sequence is EQ.

This sequence belongs to the frog skin active peptide (FSAP) family. Dermaseptin subfamily. Expressed by the skin glands.

It is found in the secreted. The protein localises to the target cell membrane. Antimicrobial peptide with activity against Gram-positive and Gram-negative bacteria and fungi. Has been tested against E.coli (MIC=47.50-128 uM), S.aureus (MIC=189.98-512 uM), K.pneumoniae (MIC&gt;189.98 uM) and C.albicans (MIC&gt;189.98 uM). Probably acts by disturbing membrane functions with its alpha-helical amphipathic structure. May penetrate bacterial membranes, but stay at the mammalian membrane surface. Shows a very weak hemolytic activity. The polypeptide is Dermaseptin-SP3 (Agalychnis spurrelli (Gliding leaf frog)).